The primary structure comprises 645 residues: ATP-dependent zinc metalloprotease FtsH 1 (645 aa).

Over Met1 to Lys6 the chain is Cytoplasmic. A helical membrane pass occupies residues Thr7–Ser27. Over Lys28–Phe110 the chain is Periplasmic. Residues Phe111 to Ile131 form a helical membrane-spanning segment. Residues Met132–Ile645 are Cytoplasmic-facing. An ATP-binding site is contributed by Gly203 to Thr210. Position 425 (His425) interacts with Zn(2+). Glu426 is an active-site residue. Residues His429 and Asp501 each contribute to the Zn(2+) site.

This sequence in the central section; belongs to the AAA ATPase family. The protein in the C-terminal section; belongs to the peptidase M41 family. Homohexamer. Zn(2+) is required as a cofactor.

The protein resides in the cell inner membrane. Its function is as follows. Acts as a processive, ATP-dependent zinc metallopeptidase for both cytoplasmic and membrane proteins. Plays a role in the quality control of integral membrane proteins. In Bdellovibrio bacteriovorus (strain ATCC 15356 / DSM 50701 / NCIMB 9529 / HD100), this protein is ATP-dependent zinc metalloprotease FtsH 1.